The sequence spans 430 residues: Histidinol dehydrogenase (430 aa).

Tyr130, Gln191, and Asn214 together coordinate NAD(+). Residues Ser237, Gln259, and His262 each contribute to the substrate site. Zn(2+)-binding residues include Gln259 and His262. Active-site proton acceptor residues include Glu327 and His328. 4 residues coordinate substrate: His328, Asp361, Glu415, and His420. Position 361 (Asp361) interacts with Zn(2+). His420 contacts Zn(2+).

Belongs to the histidinol dehydrogenase family. Zn(2+) serves as cofactor.

It catalyses the reaction L-histidinol + 2 NAD(+) + H2O = L-histidine + 2 NADH + 3 H(+). Its pathway is amino-acid biosynthesis; L-histidine biosynthesis; L-histidine from 5-phospho-alpha-D-ribose 1-diphosphate: step 9/9. Its function is as follows. Catalyzes the sequential NAD-dependent oxidations of L-histidinol to L-histidinaldehyde and then to L-histidine. The protein is Histidinol dehydrogenase of Brucella abortus (strain 2308).